A 205-amino-acid polypeptide reads, in one-letter code: Urease accessory protein UreG (205 aa).

14–21 (GPVGSGKT) lines the GTP pocket.

It belongs to the SIMIBI class G3E GTPase family. UreG subfamily. Homodimer. UreD, UreF and UreG form a complex that acts as a GTP-hydrolysis-dependent molecular chaperone, activating the urease apoprotein by helping to assemble the nickel containing metallocenter of UreC. The UreE protein probably delivers the nickel.

The protein localises to the cytoplasm. In terms of biological role, facilitates the functional incorporation of the urease nickel metallocenter. This process requires GTP hydrolysis, probably effectuated by UreG. The sequence is that of Urease accessory protein UreG from Citrobacter koseri (strain ATCC BAA-895 / CDC 4225-83 / SGSC4696).